The chain runs to 287 residues: Telomere repeat-binding factor 5 (287 aa).

Residues 1-62 (MGNQKLKWTA…WRNLSVPPGT (62 aa)) form the HTH myb-type domain. Positions 28–58 (WKNILRDPEFADQLIHRSNIDLKDKWRNLSV) form a DNA-binding region, H-T-H motif. Residues 58–107 (VPPGTQSLTNKARPAKVKEEGDTPAADANDAVTIPRPIPTIPPPPGRRTL) are disordered. Residues 93–103 (RPIPTIPPPPG) are compositionally biased toward pro residues. The 75-residue stretch at 119–193 (NAPRYDGVIF…SIQNFYKIPD (75 aa)) folds into the H15 domain. Positions 233–259 (AACKVVEAENKIDVAKLAAEEFEKMTK) form a coiled coil.

The protein belongs to the histone H1/H5 family. SMH subfamily.

It is found in the nucleus. The protein resides in the chromosome. In terms of biological role, binds preferentially double-stranded telomeric repeats. This is Telomere repeat-binding factor 5 from Arabidopsis thaliana (Mouse-ear cress).